The sequence spans 457 residues: tRNA-2-methylthio-N(6)-dimethylallyladenosine synthase (457 aa).

Residues 8–123 (KKVFIKTFGC…LPEMLARRDA (116 aa)) enclose the MTTase N-terminal domain. Cys17, Cys54, Cys86, Cys160, Cys164, and Cys167 together coordinate [4Fe-4S] cluster. Positions 146–379 (RVDGATAFVS…QEAIEANGRR (234 aa)) constitute a Radical SAM core domain. The TRAM domain occupies 382–449 (QSRVGTVQRI…PHSLRGEVLL (68 aa)).

This sequence belongs to the methylthiotransferase family. MiaB subfamily. In terms of assembly, monomer. [4Fe-4S] cluster serves as cofactor.

Its subcellular location is the cytoplasm. The enzyme catalyses N(6)-dimethylallyladenosine(37) in tRNA + (sulfur carrier)-SH + AH2 + 2 S-adenosyl-L-methionine = 2-methylsulfanyl-N(6)-dimethylallyladenosine(37) in tRNA + (sulfur carrier)-H + 5'-deoxyadenosine + L-methionine + A + S-adenosyl-L-homocysteine + 2 H(+). Functionally, catalyzes the methylthiolation of N6-(dimethylallyl)adenosine (i(6)A), leading to the formation of 2-methylthio-N6-(dimethylallyl)adenosine (ms(2)i(6)A) at position 37 in tRNAs that read codons beginning with uridine. In Methylibium petroleiphilum (strain ATCC BAA-1232 / LMG 22953 / PM1), this protein is tRNA-2-methylthio-N(6)-dimethylallyladenosine synthase.